We begin with the raw amino-acid sequence, 337 residues long: MKLKINIRPNEIIFLICIVVIFSFSYTLTYFDSPIFKEHYITNNGNDFGVENHFVTYHSTYKEDIHKRIIDPHHGLIQEITKTFYPVSSPLEKLFSFSDNILIVLIIVQVIVGFLIFLLSVEKLSKCNYQLKSIFSTKSTFYINNNNNNNNEDINNNNNNNNNNNNKNKNDERNNEEIEDEETIRKEKILIIKKKRDILLAIIIFFLVLLGVLTIIYVSFIPLNIRKAFIGQQFYYKGSIDPLCADISNEGDHHIGKCKSLNGRIGNVNDKIFGYSWSLDSGLFNVKIVFFSTILIEFLTGCLILLMKFKKDPNIVPLTKPSIASPTQIPHLFCIAK.

Residues 1–10 (MKLKINIRPN) lie on the Cytoplasmic side of the membrane. A helical transmembrane segment spans residues 11–31 (EIIFLICIVVIFSFSYTLTYF). Over 32 to 100 (DSPIFKEHYI…LEKLFSFSDN (69 aa)) the chain is Extracellular. A helical transmembrane segment spans residues 101–121 (ILIVLIIVQVIVGFLIFLLSV). Topologically, residues 122 to 197 (EKLSKCNYQL…KILIIKKKRD (76 aa)) are cytoplasmic. Over residues 148-167 (NNNNEDINNNNNNNNNNNNK) the composition is skewed to low complexity. Residues 148–179 (NNNNEDINNNNNNNNNNNNKNKNDERNNEEIE) form a disordered region. The helical transmembrane segment at 198–218 (ILLAIIIFFLVLLGVLTIIYV) threads the bilayer. Over 219-285 (SFIPLNIRKA…SWSLDSGLFN (67 aa)) the chain is Extracellular. Residues 286-306 (VKIVFFSTILIEFLTGCLILL) form a helical membrane-spanning segment. Residues 307–337 (MKFKKDPNIVPLTKPSIASPTQIPHLFCIAK) lie on the Cytoplasmic side of the membrane.

The protein resides in the membrane. This is an uncharacterized protein from Dictyostelium discoideum (Social amoeba).